The sequence spans 632 residues: uncharacterized protein (632 aa).

The next 4 membrane-spanning stretches (helical) occupy residues Leu-255 to Val-275, Ile-506 to Ile-526, Met-566 to Phe-586, and Ile-603 to Phe-623.

The protein localises to the cell membrane. This is an uncharacterized protein from Mycoplasma pneumoniae (strain ATCC 29342 / M129 / Subtype 1) (Mycoplasmoides pneumoniae).